The primary structure comprises 378 residues: Chaperone protein DnaJ (378 aa).

Positions 5-70 constitute a J domain; that stretch reads DYYEVLGVAK…QKRAAYDQYG (66 aa). A CR-type zinc finger spans residues 138–216; sequence GYDTQIRVPS…CHGSGKVKET (79 aa). Residues C151, C154, C168, C171, C190, C193, C204, and C207 each coordinate Zn(2+). CXXCXGXG motif repeat units follow at residues 151 to 158, 168 to 175, 190 to 197, and 204 to 211; these read CEVCHGSG, CPTCHGQG, CPKCHGTG, and CVHCHGSG.

The protein belongs to the DnaJ family. As to quaternary structure, homodimer. Zn(2+) serves as cofactor.

It is found in the cytoplasm. Functionally, participates actively in the response to hyperosmotic and heat shock by preventing the aggregation of stress-denatured proteins and by disaggregating proteins, also in an autonomous, DnaK-independent fashion. Unfolded proteins bind initially to DnaJ; upon interaction with the DnaJ-bound protein, DnaK hydrolyzes its bound ATP, resulting in the formation of a stable complex. GrpE releases ADP from DnaK; ATP binding to DnaK triggers the release of the substrate protein, thus completing the reaction cycle. Several rounds of ATP-dependent interactions between DnaJ, DnaK and GrpE are required for fully efficient folding. Also involved, together with DnaK and GrpE, in the DNA replication of plasmids through activation of initiation proteins. This Burkholderia lata (strain ATCC 17760 / DSM 23089 / LMG 22485 / NCIMB 9086 / R18194 / 383) protein is Chaperone protein DnaJ.